The sequence spans 863 residues: Glycogen phosphorylase (863 aa).

Lysine 618 carries the post-translational modification N6-(pyridoxal phosphate)lysine.

Belongs to the glycogen phosphorylase family. Pyridoxal 5'-phosphate is required as a cofactor.

The catalysed reaction is [(1-&gt;4)-alpha-D-glucosyl](n) + phosphate = [(1-&gt;4)-alpha-D-glucosyl](n-1) + alpha-D-glucose 1-phosphate. Phosphorylase is an important allosteric enzyme in carbohydrate metabolism. Enzymes from different sources differ in their regulatory mechanisms and in their natural substrates. However, all known phosphorylases share catalytic and structural properties. This Mycobacterium tuberculosis (strain CDC 1551 / Oshkosh) protein is Glycogen phosphorylase (glgP).